The sequence spans 287 residues: Nucleotide-binding protein GM21_3387 (287 aa).

Residue 8–15 (GLSGSGKS) coordinates ATP. A GTP-binding site is contributed by 59-62 (DIRS).

The protein belongs to the RapZ-like family.

Functionally, displays ATPase and GTPase activities. In Geobacter sp. (strain M21), this protein is Nucleotide-binding protein GM21_3387.